Reading from the N-terminus, the 322-residue chain is HPr kinase/phosphorylase (322 aa).

Residues H153 and K174 contribute to the active site. 168-175 (GRSGLGKS) is an ATP binding site. S175 contributes to the Mg(2+) binding site. The Proton acceptor; for phosphorylation activity. Proton donor; for dephosphorylation activity role is filled by D192. Positions 217–226 (MEIRGLGVVD) are important for the catalytic mechanism of both phosphorylation and dephosphorylation. E218 contributes to the Mg(2+) binding site. The active site involves R259. The important for the catalytic mechanism of dephosphorylation stretch occupies residues 280-285 (PIFPGK).

The protein belongs to the HPrK/P family. In terms of assembly, homohexamer. It depends on Mg(2+) as a cofactor.

The catalysed reaction is [HPr protein]-L-serine + ATP = [HPr protein]-O-phospho-L-serine + ADP + H(+). The enzyme catalyses [HPr protein]-O-phospho-L-serine + phosphate + H(+) = [HPr protein]-L-serine + diphosphate. Its function is as follows. Catalyzes the ATP- as well as the pyrophosphate-dependent phosphorylation of a specific serine residue in HPr, a phosphocarrier protein of the phosphoenolpyruvate-dependent sugar phosphotransferase system (PTS). HprK/P also catalyzes the pyrophosphate-producing, inorganic phosphate-dependent dephosphorylation (phosphorolysis) of seryl-phosphorylated HPr (P-Ser-HPr). This Chlorobium phaeobacteroides (strain DSM 266 / SMG 266 / 2430) protein is HPr kinase/phosphorylase.